Reading from the N-terminus, the 361-residue chain is Phospho-N-acetylmuramoyl-pentapeptide-transferase (361 aa).

Helical transmembrane passes span 25–45, 71–91, 94–114, 133–153, 169–189, 200–220, 240–260, 264–284, 289–309, and 338–358; these read TGGAMVTGALFVFLCGPWIID, TPTMGGLMVLSGLVVGTVLWA, LNPYVWIVLAVTLGFGFVGFY, WRLLIEAVIAAAACYALVRLG, VAINLGWFFVGFGAFIVVGAG, GLAIVPVMIAAASFGLISYLA, LSVLCGALLGAGLGFLWFNAP, IFMGDTGSLALGGMLGSIAVA, IVLAVIGGLFVLEAVSVIVQV, and QIVIRFWIIAVMLALAGLSTL.

This sequence belongs to the glycosyltransferase 4 family. MraY subfamily. It depends on Mg(2+) as a cofactor.

It is found in the cell inner membrane. The catalysed reaction is UDP-N-acetyl-alpha-D-muramoyl-L-alanyl-gamma-D-glutamyl-meso-2,6-diaminopimeloyl-D-alanyl-D-alanine + di-trans,octa-cis-undecaprenyl phosphate = di-trans,octa-cis-undecaprenyl diphospho-N-acetyl-alpha-D-muramoyl-L-alanyl-D-glutamyl-meso-2,6-diaminopimeloyl-D-alanyl-D-alanine + UMP. The protein operates within cell wall biogenesis; peptidoglycan biosynthesis. Functionally, catalyzes the initial step of the lipid cycle reactions in the biosynthesis of the cell wall peptidoglycan: transfers peptidoglycan precursor phospho-MurNAc-pentapeptide from UDP-MurNAc-pentapeptide onto the lipid carrier undecaprenyl phosphate, yielding undecaprenyl-pyrophosphoryl-MurNAc-pentapeptide, known as lipid I. The sequence is that of Phospho-N-acetylmuramoyl-pentapeptide-transferase from Rhodopseudomonas palustris (strain BisB18).